Reading from the N-terminus, the 523-residue chain is 2,3-bisphosphoglycerate-independent phosphoglycerate mutase (523 aa).

Positions 13 and 63 each coordinate Mn(2+). Ser63 acts as the Phosphoserine intermediate in catalysis. Substrate contacts are provided by residues His124, 156–157, Arg188, Arg194, 268–271, and Lys341; these read RD and RSDR. Mn(2+) contacts are provided by Asp408, His412, Asp449, His450, and His467.

Belongs to the BPG-independent phosphoglycerate mutase family. In terms of assembly, monomer. The cofactor is Mn(2+).

The catalysed reaction is (2R)-2-phosphoglycerate = (2R)-3-phosphoglycerate. The protein operates within carbohydrate degradation; glycolysis; pyruvate from D-glyceraldehyde 3-phosphate: step 3/5. Catalyzes the interconversion of 2-phosphoglycerate and 3-phosphoglycerate. The protein is 2,3-bisphosphoglycerate-independent phosphoglycerate mutase of Salinibacter ruber (strain DSM 13855 / M31).